Reading from the N-terminus, the 511-residue chain is MWILLGIAVLIMTLVWDNSRKQWRVNTFEKSRILGPFTIPIVGNGLQALTLRPENFIQRFGDYFNKYGKTFRLWILGECLIYTKDLKYFESILSSSTLLKKAHLYRFLRDFLGDGLLLSTGNKWTSRRKVLAPAFHFKCLENFVEIMDRNSGIMVEKLKNYADGKTCVDLFKFVSLEALDVTTETAMGVQVNAQNEPNFPYTKALKSVVYIESKRLASVSMRYNWLFPLAAPLVYRRLQKDIAIMQDFTDKVIRERRAILERARADGTYKPLIMGDDDIGGKAKMTLLDILLQATIDNKPLSDVDIREEVDVFIFAGDDTTTSGVSHALHAISRHPKVQECIYEELVSVLGPDPDASVTQTKLLELKYLDCVIKETMRLHPPVPILGRYIPEDLKIGEITIPGNTSILLMPYYVYRDPEYFPDPLVFKPERWMDMKTTSNTPPLAYIPFSSGPKNCIGQKFANLQMKALISKVIRHYELLPLGADLKATYTFILSSSTGNNVGLKPRTRVK.

Residue C456 participates in heme binding.

The protein belongs to the cytochrome P450 family. Heme serves as cofactor.

The protein resides in the endoplasmic reticulum membrane. The protein localises to the microsome membrane. Functionally, may be involved in the metabolism of insect hormones and in the breakdown of synthetic insecticides. In Drosophila melanogaster (Fruit fly), this protein is Probable cytochrome P450 4d21 (Cyp4d21).